The primary structure comprises 193 residues: T-cell receptor-associated transmembrane adapter 1 (193 aa).

At 1 to 10 the chain is on the extracellular side; that stretch reads MSGNAECHFS. The helical; Signal-anchor for type III membrane protein transmembrane segment at 11-31 threads the bilayer; the sequence is IWAILAFLGLALTISLIFNIF. At 32-193 the chain is on the cytoplasmic side; sequence HCVEKQRQEK…LHSLDYDLAQ (162 aa). Ser46 carries the phosphoserine modification. Tyr80 bears the Phosphotyrosine mark. An interaction with PIK3R1 region spans residues 80–83; that stretch reads YEQM. The interval 116-166 is disordered; the sequence is NEGKRRKPRKQKSHLSDKDEEGQMHAKDISLSKTTLVDSYPPESEAIEENI. A compositionally biased stretch (basic residues) spans 119 to 128; sequence KRRKPRKQKS. The segment covering 129-145 has biased composition (basic and acidic residues); the sequence is HLSDKDEEGQMHAKDIS.

In terms of assembly, homodimer; disulfide-linked. Interacts with CD3Z. When phosphorylated, interacts with PIK3R1. Phosphorylated on tyrosines upon TCR activation.

Its subcellular location is the cell membrane. Its function is as follows. Stabilizes the TCR (T-cell antigen receptor)/CD3 complex at the surface of T-cells. The protein is T-cell receptor-associated transmembrane adapter 1 (TRAT1) of Bos taurus (Bovine).